We begin with the raw amino-acid sequence, 356 residues long: Popeye domain-containing protein 1 (356 aa).

Residues 1 to 48 lie on the Extracellular side of the membrane; it reads MNFTEPSPLAQSTVVGFLPELESLTPVPSNETSCENWREVHHLVFHAA. N-linked (GlcNAc...) asparagine glycosylation is found at asparagine 2 and asparagine 30. A helical membrane pass occupies residues 49-69; the sequence is NVCFAVGLLIPTTLHLHMILL. Position 70 (arginine 70) is a topological domain, cytoplasmic. Residues 71–91 form a helical membrane-spanning segment; the sequence is VMLSIGCTLYVVWATLYRCAL. A topological domain (extracellular) is located at residue aspartate 92. A helical membrane pass occupies residues 93–113; it reads MMIWNSVFLGINILHLSYLLY. Positions 93–115 are required for interaction with CAV3; that stretch reads MMIWNSVFLGINILHLSYLLYKK. The Cytoplasmic segment spans residues 114-356; the sequence is KKRPVKIEKD…VPVSPAHQLP (243 aa). Positions 136–186 are required for interaction with KCNK2; sequence RVPPDLFRRLTGQFCVIQTLKRGQVYATEDKTSVDDRLSILLKGRMKVSYR. 2 positions are modified to phosphoserine: serine 295 and serine 318. The span at 313 to 323 shows a compositional bias: low complexity; it reads SSSTASLPMSS. The disordered stretch occupies residues 313–356; it reads SSSTASLPMSSPQQRASPKMKPIEEGLEDDDEVFVPVSPAHQLP.

This sequence belongs to the popeye family. Homodimer. Homodimerization requires the C-terminus cytoplasmic region. Interacts (via the C-terminus cytoplasmic tail) with TJP1. Interacts (via the C-terminus cytoplasmic tail) with ARHGEF25/GEFT (via the DH domain). Interacts (via the C-terminus cytoplasmic tail) with VAMP3. Interacts with KCNK2; the interaction enhances KCNK2 surface expression and is inhibited by cAMP. Interacts with CAV3. Strongly expressed in heart and skeletal muscle. Weakly expressed in brain, spleen, liver, kidney and lung.

The protein localises to the lateral cell membrane. It localises to the cell junction. It is found in the tight junction. Its subcellular location is the membrane. The protein resides in the cell membrane. The protein localises to the sarcolemma. It localises to the caveola. In terms of biological role, cell adhesion molecule involved in the establishment and/or maintenance of cell integrity. Involved in the formation and regulation of the tight junction (TJ) paracellular permeability barrier in epithelial cells. Plays a role in VAMP3-mediated vesicular transport and recycling of different receptor molecules through its interaction with VAMP3. Plays a role in the regulation of cell shape and movement by modulating the Rho-family GTPase activity through its interaction with ARHGEF25/GEFT. Induces primordial adhesive contact and aggregation of epithelial cells in a Ca(2+)-independent manner. Important for skeletal muscle and heart development. Also involved in striated muscle regeneration and repair and in the regulation of cell spreading. Important for the maintenance of cardiac function. Plays a regulatory function in heart rate dynamics mediated, at least in part, through cAMP-binding and, probably, by increasing cell surface expression of the potassium channel KCNK2 and enhancing current density. Is a caveolae-associated protein important for the preservation of caveolae structural and functional integrity as well as for heart protection against ischemia injury. This Rattus norvegicus (Rat) protein is Popeye domain-containing protein 1 (Popdc1).